Reading from the N-terminus, the 391-residue chain is Flagellin (391 aa).

It belongs to the bacterial flagellin family.

It is found in the secreted. The protein resides in the bacterial flagellum. Flagellin is the subunit protein which polymerizes to form the filaments of bacterial flagella. The sequence is that of Flagellin (flaA) from Bordetella bronchiseptica (strain ATCC BAA-588 / NCTC 13252 / RB50) (Alcaligenes bronchisepticus).